The sequence spans 691 residues: DNA-directed RNA polymerase subunit beta' (691 aa).

Residues Cys-76, Cys-78, Cys-94, and Cys-97 each contribute to the Zn(2+) site. Mg(2+)-binding residues include Asp-496, Asp-498, and Asp-500.

This sequence belongs to the RNA polymerase beta' chain family. RpoC1 subfamily. It depends on Mg(2+) as a cofactor. Zn(2+) is required as a cofactor.

The protein localises to the plastid. The catalysed reaction is RNA(n) + a ribonucleoside 5'-triphosphate = RNA(n+1) + diphosphate. In terms of biological role, DNA-dependent RNA polymerase catalyzes the transcription of DNA into RNA using the four ribonucleoside triphosphates as substrates. The protein is DNA-directed RNA polymerase subunit beta' of Cuscuta exaltata (Tall dodder).